The chain runs to 206 residues: Large ribosomal subunit protein uL4 (206 aa).

It belongs to the universal ribosomal protein uL4 family. As to quaternary structure, part of the 50S ribosomal subunit.

One of the primary rRNA binding proteins, this protein initially binds near the 5'-end of the 23S rRNA. It is important during the early stages of 50S assembly. It makes multiple contacts with different domains of the 23S rRNA in the assembled 50S subunit and ribosome. In terms of biological role, forms part of the polypeptide exit tunnel. This Rhodopseudomonas palustris (strain BisB5) protein is Large ribosomal subunit protein uL4.